The primary structure comprises 634 residues: tRNA uridine 5-carboxymethylaminomethyl modification enzyme MnmG (634 aa).

14-19 lines the FAD pocket; it reads GGGHAG. An NAD(+)-binding site is contributed by 279–293; sequence GPRYCPSIEDKVVRF.

It belongs to the MnmG family. Homodimer. Heterotetramer of two MnmE and two MnmG subunits. Requires FAD as cofactor.

It is found in the cytoplasm. Its function is as follows. NAD-binding protein involved in the addition of a carboxymethylaminomethyl (cmnm) group at the wobble position (U34) of certain tRNAs, forming tRNA-cmnm(5)s(2)U34. The polypeptide is tRNA uridine 5-carboxymethylaminomethyl modification enzyme MnmG (Xanthomonas euvesicatoria pv. vesicatoria (strain 85-10) (Xanthomonas campestris pv. vesicatoria)).